Reading from the N-terminus, the 88-residue chain is UPF0250 protein Swoo_3713 (88 aa).

This sequence belongs to the UPF0250 family.

This Shewanella woodyi (strain ATCC 51908 / MS32) protein is UPF0250 protein Swoo_3713.